A 346-amino-acid chain; its full sequence is Heparan sulfate glucosamine 3-O-sulfotransferase 5 (346 aa).

Over 1–12 (MLFKQQAWLRQK) the chain is Cytoplasmic. A helical; Signal-anchor for type II membrane protein membrane pass occupies residues 13 to 32 (LLVLGSLAVGSLLYLVARVG). The Lumenal segment spans residues 33 to 346 (SLDRLQPICP…QITGRTLNWP (314 aa)). 100 to 104 (KGGTR) serves as a coordination point for 3'-phosphoadenylyl sulfate. Substrate contacts are provided by residues 122–128 (EIHFFDN) and 155–158 (KSPA). Positions 183 and 191 each coordinate 3'-phosphoadenylyl sulfate. Residue 226 to 227 (YK) coordinates substrate. Asn-287 is a glycosylation site (N-linked (GlcNAc...) asparagine). Tyr-293 is a binding site for 3'-phosphoadenylyl sulfate. The cysteines at positions 294 and 304 are disulfide-linked. Position 309–313 (309–313 (KGRIH)) interacts with 3'-phosphoadenylyl sulfate.

This sequence belongs to the sulfotransferase 1 family. In terms of tissue distribution, highly expressed in skeletal muscle and fetal brain, and also found in adult brain, spinal cord, cerebellum and colon.

It localises to the golgi apparatus membrane. The catalysed reaction is alpha-D-glucosaminyl-[heparan sulfate](n) + 3'-phosphoadenylyl sulfate = 3-sulfo-alpha-D-glucosaminyl-[heparan sulfate](n) + adenosine 3',5'-bisphosphate + H(+). Functionally, sulfotransferase that utilizes 3'-phospho-5'-adenylyl sulfate (PAPS) to catalyze the transfer of a sulfo group to position 3 of glucosamine residues in heparan. Catalyzes the rate limiting step in the biosynthesis of heparan sulfate (HSact). This modification is a crucial step in the biosynthesis of anticoagulant heparan sulfate as it completes the structure of the antithrombin pentasaccharide binding site. Also generates GlcUA-GlcNS or IdoUA-GlcNS and IdoUA2S-GlcNH2. The substrate-specific O-sulfation generates an enzyme-modified heparan sulfate which acts as a binding receptor to Herpes simplex virus-1 (HSV-1) and permits its entry. The protein is Heparan sulfate glucosamine 3-O-sulfotransferase 5 (HS3ST5) of Homo sapiens (Human).